The sequence spans 901 residues: MSILTRIFGSRNERVLRKLKKQVVKINKMEPAFEALSDDELKAKTQEFRDRLSGGETLQQILPEAFATVREASKRVLGMRHFDVQLIGGMVLTNRCIAEMRTGEGKTLTATLPCYLIALEGKGVHVVTVNDYLARRDAETNRPLFEFLGMSVGVNIPGLSPEEKRAAYAADITYATNSELGFDYLRDNLAHSKEERFQRTLGYALVDEVDSILIDEARTPLIISGQAENSSELYIAVNKLIPSLIKQEKEDTEEYQGEGDFTLDLKSKQAHLTERGQEKVEDWLITQGLMPEGDSLYSPSRIVLLHHVMAALRAHTLFEKDVDYIVKDGEIVIVDEHTGRTMAGRRWSDGLHQAIEAKEGVDVKSENQTVASISYQNYFRLYERLAGMTGTADTEAFEFQQIYGLETVVIPTNRPMIRDDRTDVMFENEQYKFNAIIEDIKDCVERQQPVLVGTISVEKSEELSKALDKAGIKHNVLNAKFHQQEAEIVAEAGFPSAVTIATNMAGRGTDIILGGNWKAQAAKLENPTQEQIEALKAEWEKNHEIVMKAGGLHIIGTERHESRRIDNQLRGRSGRQGDPGSSRFYLSLEDGLMRIYLNEGKLNLMRKAFTVAGEAMESKMLAKVIASAQAKVEAFHFDGRKNLLEYDDVANDQRHAIYEQRNHLLDNDDISETINAIRHDVFNGVIDQYIPPQSLEEQWDIKGLEERLSQEFGMELPISNWLEEDNNLHEESLCERIVEIAEKEYKEKEALVGEDAMRHFEKGVMLQTLDELWKEHLASMDYLRQGIHLRGYAQKDPKQEYKKESFRMFTEMLDSLKHQVITTLTRVRVRTQEEMEEAERARQEMAARINQNNLPVDENSQTTQNSETEDYSDRRIGRNEPCPCGSGKKYKHCHGSRVARQ.

Residues glutamine 85, 103 to 107 (GEGKT), and aspartate 510 each bind ATP. The tract at residues 848–901 (RINQNNLPVDENSQTTQNSETEDYSDRRIGRNEPCPCGSGKKYKHCHGSRVARQ) is disordered. The span at 849–866 (INQNNLPVDENSQTTQNS) shows a compositional bias: polar residues. 4 residues coordinate Zn(2+): cysteine 882, cysteine 884, cysteine 893, and histidine 894. Over residues 888 to 901 (KKYKHCHGSRVARQ) the composition is skewed to basic residues.

It belongs to the SecA family. As to quaternary structure, monomer and homodimer. Part of the essential Sec protein translocation apparatus which comprises SecA, SecYEG and auxiliary proteins SecDF-YajC and YidC. Zn(2+) serves as cofactor.

Its subcellular location is the cell inner membrane. It is found in the cytoplasm. It carries out the reaction ATP + H2O + cellular proteinSide 1 = ADP + phosphate + cellular proteinSide 2.. Functionally, part of the Sec protein translocase complex. Interacts with the SecYEG preprotein conducting channel. Has a central role in coupling the hydrolysis of ATP to the transfer of proteins into and across the cell membrane, serving both as a receptor for the preprotein-SecB complex and as an ATP-driven molecular motor driving the stepwise translocation of polypeptide chains across the membrane. The chain is Protein translocase subunit SecA from Haemophilus influenzae (strain 86-028NP).